Reading from the N-terminus, the 325-residue chain is tRNA pseudouridine synthase B (325 aa).

Residue aspartate 49 is the Nucleophile of the active site.

This sequence belongs to the pseudouridine synthase TruB family. Type 1 subfamily.

It carries out the reaction uridine(55) in tRNA = pseudouridine(55) in tRNA. Functionally, responsible for synthesis of pseudouridine from uracil-55 in the psi GC loop of transfer RNAs. The sequence is that of tRNA pseudouridine synthase B from Mesorhizobium japonicum (strain LMG 29417 / CECT 9101 / MAFF 303099) (Mesorhizobium loti (strain MAFF 303099)).